We begin with the raw amino-acid sequence, 273 residues long: Glutamate racemase (273 aa).

Substrate-binding positions include D10 to S11 and Y42 to G43. Residue C73 is the Proton donor/acceptor of the active site. N74–T75 is a binding site for substrate. The active-site Proton donor/acceptor is the C184. Residue T185–H186 participates in substrate binding.

It belongs to the aspartate/glutamate racemases family.

It carries out the reaction L-glutamate = D-glutamate. Its pathway is cell wall biogenesis; peptidoglycan biosynthesis. Its function is as follows. Provides the (R)-glutamate required for cell wall biosynthesis. The polypeptide is Glutamate racemase (Desulforudis audaxviator (strain MP104C)).